A 433-amino-acid chain; its full sequence is Enolase (433 aa).

Q167 is a binding site for (2R)-2-phosphoglycerate. The active-site Proton donor is the E209. 3 residues coordinate Mg(2+): D246, E291, and D318. (2R)-2-phosphoglycerate contacts are provided by K343, R372, S373, and K394. Catalysis depends on K343, which acts as the Proton acceptor.

The protein belongs to the enolase family. Component of the RNA degradosome, a multiprotein complex involved in RNA processing and mRNA degradation. Mg(2+) serves as cofactor.

The protein resides in the cytoplasm. Its subcellular location is the secreted. It localises to the cell surface. The catalysed reaction is (2R)-2-phosphoglycerate = phosphoenolpyruvate + H2O. It functions in the pathway carbohydrate degradation; glycolysis; pyruvate from D-glyceraldehyde 3-phosphate: step 4/5. Functionally, catalyzes the reversible conversion of 2-phosphoglycerate (2-PG) into phosphoenolpyruvate (PEP). It is essential for the degradation of carbohydrates via glycolysis. The protein is Enolase of Marinomonas sp. (strain MWYL1).